The sequence spans 320 residues: GPI-specific phospholipase A2-like PGAP3 (320 aa).

The N-terminal stretch at Met-1 to Gly-20 is a signal peptide. The Lumenal segment spans residues Ser-21–Arg-98. A glycan (N-linked (GlcNAc...) asparagine) is linked at Asn-40. A helical transmembrane segment spans residues Phe-99 to Leu-119. Topologically, residues Val-120–Met-135 are cytoplasmic. The helical transmembrane segment at Tyr-136 to Phe-156 threads the bilayer. At His-157–Tyr-169 the chain is on the lumenal side. The helical transmembrane segment at Phe-170–Leu-190 threads the bilayer. At Gln-191–Pro-193 the chain is on the cytoplasmic side. A helical transmembrane segment spans residues Ala-194–Leu-214. At Ser-215–Asn-224 the chain is on the lumenal side. The helical transmembrane segment at Leu-225–Trp-245 threads the bilayer. The Cytoplasmic portion of the chain corresponds to Asn-246–Val-257. The chain crosses the membrane as a helical span at residues Val-258–Phe-278. Trp-279 is a topological domain (lumenal). A helical membrane pass occupies residues Val-280–Phe-299. The Cytoplasmic segment spans residues Ser-300–Asp-320.

The protein belongs to the PGAP3 family. In terms of tissue distribution, ubiquitously expressed, with highest levels in thyroid and placenta.

Its subcellular location is the golgi apparatus membrane. Its function is as follows. Involved in the fatty acid remodeling steps of GPI-anchor maturation where the unsaturated acyl chain at sn-2 of inositol phosphate is replaced by a saturated stearoyl chain. May catalyze the first step of the fatty acid remodeling, by removing the unsaturated acyl chain at sn-2 of inositol phosphate, generating a lyso-GPI intermediate. The fatty acid remodeling steps is critical for the integration of GPI-APs into lipid rafts. The protein is GPI-specific phospholipase A2-like PGAP3 of Homo sapiens (Human).